A 1433-amino-acid polypeptide reads, in one-letter code: Pleckstrin homology domain-containing family H member 1 (1433 aa).

Residues 40 to 174 (NIRHLLAERM…QILMLQDKLQ (135 aa)) adopt a coiled-coil conformation. Disordered regions lie at residues 247–346 (DKAD…LSPP) and 552–634 (SSVP…TSSY). The span at 252–266 (PKSSQDGVDATSTVK) shows a compositional bias: polar residues. Residues 279–299 (MRDRAMGGASDRDHSSDELNS) show a composition bias toward basic and acidic residues. Positions 308 to 318 (SSSSSSSSSSS) are enriched in low complexity. Positions 332–343 (TPTPKSPPPVSL) are enriched in pro residues. The segment covering 557–567 (PDDDSGSEDDS) has biased composition (acidic residues). Residues 568 to 578 (SSLASLHTSTL) show a composition bias toward low complexity. Residues 597–606 (VSTSSISSES) are compositionally biased toward polar residues. PH domains are found at residues 643–737 (TLEK…NVLK) and 751–859 (KPTA…VAAG). One can recognise a MyTH4 domain in the interval 896–1050 (FSKEGLRYPL…PSRMEILSIL (155 aa)). The FERM domain occupies 1061 to 1392 (FSIPVHFMNN…SYINYWTSSL (332 aa)).

Its function is as follows. Critical component of the guidance pathway underlying endothelial cell migration and blood vessel patterning. Involved in mediating membrane localization of ephrin proteins, which have been shown to provide guidance cues for endothelial cell migration. In Danio rerio (Zebrafish), this protein is Pleckstrin homology domain-containing family H member 1 (plekhh1).